Consider the following 284-residue polypeptide: uncharacterized protein (284 aa).

A signal peptide spans 1 to 24; it reads MLYSRESRTTVLFLALVTSLTVLC. Residues 25–84 are Cytoplasmic-facing; it reads HSVDVTTVFTTSTITEITTVTAAPQPQNKAETALNTATNIIQTMQFLFNCAPFKWKGPLK. A helical membrane pass occupies residues 85 to 104; it reads ITSCALNFIVLLLTAWGYLL. Residues 105–284 lie on the Extracellular side of the membrane; that stretch reads KYLQENKLNS…SVHMYSSSLL (180 aa). A glycan (N-linked (GlcNAc...) asparagine) is linked at N270.

The protein to yeast YNL033w.

The protein localises to the cell membrane. This is an uncharacterized protein from Saccharomyces cerevisiae (strain ATCC 204508 / S288c) (Baker's yeast).